Reading from the N-terminus, the 190-residue chain is MSEPQGQELRAECPVCWNPFNNTFHTPKVLDCCHSFCVECLAHLSLVTPARRRLLCPLCRQPTVLASGQPVTDLPTDTAMLTLLRLEPHHVILEGHQLCLKDQPKSRYFLRQPRVYTLDLGAEPGSQTGLPQDTAPDTRPVPIPSHYSLRECVRNPHFRIFAYLMAVILSVTLLLIFSIFWTKQFFWGMG.

Residues M1 to R159 are Cytoplasmic-facing. Residues C13–R60 form an RING-type zinc finger. Residues I160–F180 form a helical; Anchor for type IV membrane protein membrane-spanning segment. At W181–G190 the chain is on the lumenal side.

Interacts with FATE1. Interacts with SEC16A. Interacts with BCL2L1. Post-translationally, autoubiquitinated (in vitro). Highly expressed in the kidney and testis.

It is found in the endoplasmic reticulum membrane. Its subcellular location is the endoplasmic reticulum. The protein localises to the golgi apparatus. It localises to the cis-Golgi network membrane. The protein resides in the lysosome membrane. It carries out the reaction S-ubiquitinyl-[E2 ubiquitin-conjugating enzyme]-L-cysteine + [acceptor protein]-L-lysine = [E2 ubiquitin-conjugating enzyme]-L-cysteine + N(6)-ubiquitinyl-[acceptor protein]-L-lysine.. It participates in protein modification; protein ubiquitination. Acts as an E3 ubiquitin ligase catalyzing the covalent attachment of ubiquitin moieties onto substrate proteins. Triggers apoptosis in response to prolonged ER stress by mediating the polyubiquitination and subsequent proteasomal degradation of BCL2L1. May collaborate with FATE1 to restrain BIK protein levels thus regulating apoptotic signaling. This Mus musculus (Mouse) protein is E3 ubiquitin-protein ligase RNF183 (Rnf183).